The following is a 339-amino-acid chain: WAT1-related protein At5g40210 (339 aa).

The next 10 helical transmembrane spans lie at 11-31 (GWILTAMVVTEFSNVGVNTLV), 42-62 (FVVLVYSYTFGSLLLLPLTFF), 74-94 (FSILCNMGILGLIASAFQILG), 104-124 (TLSSAMSNVNPAFTFILAVVF), 140-160 (VLGTILSIIGALVVTLYHGPM), 168-188 (WIIGGGLLALQYILVSVSYLV), 200-220 (VVVTLVHNVCIAVVCAFVSLL), 233-253 (FDITLITVVATGILNSGYYVI), 266-286 (LSMFKPLSILIAAVSTFIFLG), and 289-309 (LYLGSVMGGILISIGFYMVLW). Residues 29-154 (TLVKAATSKG…LSIIGALVVT (126 aa)) form the EamA domain.

Belongs to the drug/metabolite transporter (DMT) superfamily. Plant drug/metabolite exporter (P-DME) (TC 2.A.7.4) family.

The protein localises to the membrane. The sequence is that of WAT1-related protein At5g40210 from Arabidopsis thaliana (Mouse-ear cress).